Here is a 196-residue protein sequence, read N- to C-terminus: Golgi to ER traffic protein 1 (196 aa).

At Met-1–Ile-10 the chain is on the lumenal side. A helical membrane pass occupies residues Leu-11–Ser-30. The Cytoplasmic segment spans residues Thr-31–Leu-114. Residues Ala-76–Leu-114 are a coiled coil. The helical transmembrane segment at Met-115–Phe-135 threads the bilayer. Over Tyr-136–Ala-159 the chain is Lumenal. A helical transmembrane segment spans residues Val-160–Val-176. Residues Ile-177 to Lys-196 are Cytoplasmic-facing.

Belongs to the WRB/GET1 family. As to quaternary structure, component of the Golgi to ER traffic (GET) complex, which is composed of GET1, GET2 and GET3. Within the complex, GET1 and GET2 form a heterotetramer which is stabilized by phosphatidylinositol binding and which binds to the GET3 homodimer.

It localises to the endoplasmic reticulum membrane. The protein resides in the golgi apparatus membrane. Its function is as follows. Required for the post-translational delivery of tail-anchored (TA) proteins to the endoplasmic reticulum. Together with GET2, acts as a membrane receptor for soluble GET3, which recognizes and selectively binds the transmembrane domain of TA proteins in the cytosol. The GET complex cooperates with the HDEL receptor ERD2 to mediate the ATP-dependent retrieval of resident ER proteins that contain a C-terminal H-D-E-L retention signal from the Golgi to the ER. The sequence is that of Golgi to ER traffic protein 1 from Candida tropicalis (strain ATCC MYA-3404 / T1) (Yeast).